The primary structure comprises 366 residues: MDNYEYSELLKKLKNKVGNIASIIKPEEIKARLKEIENLENSPSFWSDVKQAGIIGKEKTKISNLLKNYENAFNALNDASELFDLANSENDLDTIQALFDDAPNLEDLIVSLEISMLLSGENDGKNAIVSIHPGAGGTESNDWASMLYRMYLRFCEREGFKVETLDFQEGEEAGLKDVSFLVKGENAYGYLKAENGIHRLVRTSPFDSAGRRHTSFSSVMVSPELDDDIEIEIEDKDIRIDYYRASGAGGQHVNKTESAVRITHMPSGIVVQCQNDRSQHKNKATAFKMLKSRLYELELMKQQDEANSSEKSEIGWGHQIRSYVLFPYQQVKDTRSNEAFSQVDNILDGDIKKMIEGVLIAQKAQD.

Gln251 is subject to N5-methylglutamine.

Belongs to the prokaryotic/mitochondrial release factor family. In terms of processing, methylated by PrmC. Methylation increases the termination efficiency of RF2.

It is found in the cytoplasm. Peptide chain release factor 2 directs the termination of translation in response to the peptide chain termination codons UGA and UAA. This Campylobacter lari (strain RM2100 / D67 / ATCC BAA-1060) protein is Peptide chain release factor 2.